The chain runs to 190 residues: Lipid A 1-phosphatase (190 aa).

Transmembrane regions (helical) follow at residues 22–42 (LLAL…PKVP), 60–80 (FIPT…VGLF), 117–137 (GNFN…AFLM), 145–162 (YFWL…RIYL), and 164–184 (MHTI…VSLF).

It belongs to the lipid A LpxE 1-phosphatase family. Does not require divalent cations. is required as a cofactor.

Its subcellular location is the cell inner membrane. It functions in the pathway bacterial outer membrane biogenesis; LPS lipid A biosynthesis. Functionally, removes the 1-phosphate group from tetra- and probably hexaacylated lipid A species, has no requirement for the Kdo moiety of lipid A. Has no 4'-phosphatase activity. Has no activity on phospholipids (phosphatidylglycerol, phosphatidylethanolamine or cardiolipin). This enzyme has to act before EptA can attach phosphoethanolamine to the 1-position of lipid A. Absence of the 1-phosphate group renders the bacteria partially resistant to host-derived cationic antimicrobial peptides (CAMP), allowing it to camouflage itself from the host innate immune response, and plays a role in the long-term colonization of the host's stomach. The protein is Lipid A 1-phosphatase of Helicobacter pylori (strain ATCC 700392 / 26695) (Campylobacter pylori).